Consider the following 485-residue polypeptide: Catalase isozyme 1 (485 aa).

Residues His58 and Asn131 contribute to the active site. Tyr341 is a heme binding site.

It belongs to the catalase family. In terms of assembly, homotetramer. Heme is required as a cofactor.

It is found in the peroxisome. It catalyses the reaction 2 H2O2 = O2 + 2 H2O. Its function is as follows. Occurs in almost all aerobically respiring organisms and serves to protect cells from the toxic effects of hydrogen peroxide. The chain is Catalase isozyme 1 (CAT1) from Nicotiana plumbaginifolia (Leadwort-leaved tobacco).